Consider the following 349-residue polypeptide: tRNA pseudouridine synthase D (349 aa).

Phenylalanine 27 is a binding site for substrate. Aspartate 80 (nucleophile) is an active-site residue. Asparagine 129 is a substrate binding site. The 149-residue stretch at 155 to 303 (GVPNYFGAQR…VEAARRAMLL (149 aa)) folds into the TRUD domain. A substrate-binding site is contributed by phenylalanine 329.

It belongs to the pseudouridine synthase TruD family.

It catalyses the reaction uridine(13) in tRNA = pseudouridine(13) in tRNA. In terms of biological role, responsible for synthesis of pseudouridine from uracil-13 in transfer RNAs. This Escherichia coli O81 (strain ED1a) protein is tRNA pseudouridine synthase D.